A 417-amino-acid chain; its full sequence is Serine hydroxymethyltransferase (417 aa).

(6S)-5,6,7,8-tetrahydrofolate contacts are provided by residues Leu121 and 125 to 127 (GHL). At Lys229 the chain carries N6-(pyridoxal phosphate)lysine. Residue 355–357 (SPF) coordinates (6S)-5,6,7,8-tetrahydrofolate.

Belongs to the SHMT family. As to quaternary structure, homodimer. Pyridoxal 5'-phosphate is required as a cofactor.

The protein resides in the cytoplasm. It carries out the reaction (6R)-5,10-methylene-5,6,7,8-tetrahydrofolate + glycine + H2O = (6S)-5,6,7,8-tetrahydrofolate + L-serine. It functions in the pathway one-carbon metabolism; tetrahydrofolate interconversion. Its pathway is amino-acid biosynthesis; glycine biosynthesis; glycine from L-serine: step 1/1. In terms of biological role, catalyzes the reversible interconversion of serine and glycine with tetrahydrofolate (THF) serving as the one-carbon carrier. This reaction serves as the major source of one-carbon groups required for the biosynthesis of purines, thymidylate, methionine, and other important biomolecules. Also exhibits THF-independent aldolase activity toward beta-hydroxyamino acids, producing glycine and aldehydes, via a retro-aldol mechanism. This chain is Serine hydroxymethyltransferase, found in Salmonella choleraesuis (strain SC-B67).